The primary structure comprises 250 residues: 7-cyano-7-deazaguanine synthase (250 aa).

21–31 provides a ligand contact to ATP; sequence FSGGQDSSVCL. The Zn(2+) site is built by Cys209, Cys224, Cys227, and Cys230.

This sequence belongs to the QueC family. Zn(2+) is required as a cofactor.

The catalysed reaction is 7-carboxy-7-deazaguanine + NH4(+) + ATP = 7-cyano-7-deazaguanine + ADP + phosphate + H2O + H(+). The protein operates within purine metabolism; 7-cyano-7-deazaguanine biosynthesis. Its function is as follows. Catalyzes the ATP-dependent conversion of 7-carboxy-7-deazaguanine (CDG) to 7-cyano-7-deazaguanine (preQ(0)). The sequence is that of 7-cyano-7-deazaguanine synthase from Caulobacter sp. (strain K31).